Here is a 297-residue protein sequence, read N- to C-terminus: N-acetylneuraminate lyase (297 aa).

S47 and T48 together coordinate aceneuramate. Catalysis depends on Y137, which acts as the Proton donor. K165 acts as the Schiff-base intermediate with substrate in catalysis. 5 residues coordinate aceneuramate: T167, G189, D191, E192, and S208.

The protein belongs to the DapA family. NanA subfamily. As to quaternary structure, homotetramer.

It localises to the cytoplasm. It catalyses the reaction aceneuramate = aldehydo-N-acetyl-D-mannosamine + pyruvate. Its pathway is amino-sugar metabolism; N-acetylneuraminate degradation; D-fructose 6-phosphate from N-acetylneuraminate: step 1/5. In terms of biological role, catalyzes the reversible aldol cleavage of N-acetylneuraminic acid (sialic acid; Neu5Ac) to form pyruvate and N-acetylmannosamine (ManNAc) via a Schiff base intermediate. This is N-acetylneuraminate lyase from Escherichia coli (strain SE11).